The following is a 508-amino-acid chain: GATA zinc finger domain-containing protein 13 (508 aa).

Disordered stretches follow at residues 20–51 and 203–296; these read YSKN…INNN and MSII…PEIE. Over residues 23–51 the composition is skewed to low complexity; sequence NNNNNNNNNNNNNINNNNNNNNNNNINNN. The span at 203–224 shows a compositional bias: polar residues; sequence MSIIPSDNFPTPQLPLETNTDL. Residues 225–247 are compositionally biased toward low complexity; sequence NNTSDCSSTTFSSPPSSAFNSPN. The segment covering 248 to 266 has biased composition (polar residues); the sequence is LQNDYTQPQNQKSQSSTIV. Over residues 269-279 the composition is skewed to basic residues; that stretch reads NSSKSKSKNNK. Residues 327 to 354 form a GATA-type zinc finger; sequence CSICKIKCSIYWRRILINEVRTSVCNAC. Residues 356–433 adopt a coiled-coil conformation; that stretch reads LRTMKKTKKE…NNNNNNNNNN (78 aa). Residues 399-482 show a composition bias toward low complexity; it reads TTTTTTTTTS…NNNNNDNYND (84 aa). Residues 399–484 are disordered; the sequence is TTTTTTTTTS…NNNDNYNDSI (86 aa).

The polypeptide is GATA zinc finger domain-containing protein 13 (gtaM) (Dictyostelium discoideum (Social amoeba)).